The chain runs to 318 residues: MISINEISYSIVEEMLDFAEDYRIEPHTLANDSVVIDCGVKAKAGYEAGLLFTQVCMGGLAQTSLTHKKLKHEVFYPFIEVSTDFPAIACLAAQKAGWRISQDGYFAMGSGPARALALKPKHTYEVIEYEDDYDFAVIALEADKLPNEKVMDYIASECGVDSSDVVALVAPTNSPVGSVQIAGRVVEMAIYKLAELGFDTRHIVSAFGSAPIPPVKKDAAVAMGTTNDASIYHGSVTLTVDGGNIKDFVPKIPSSTSKDYGKPFYTVFKEAKFDFYKLDPGIFAPAEVVVNDISTGETYIAGKINADVCMESFGFKKL.

Belongs to the MCH family.

It localises to the cytoplasm. It carries out the reaction 5,10-methenyl-5,6,7,8-tetrahydromethanopterin + H2O = N(5)-formyl-5,6,7,8-tetrahydromethanopterin + H(+). The protein operates within one-carbon metabolism; methanogenesis from CO(2); 5,10-methenyl-5,6,7,8-tetrahydromethanopterin from CO(2): step 3/3. Its function is as follows. Catalyzes the reversible interconversion of 5-formyl-H(4)MPT to methenyl-H(4)MPT(+). The polypeptide is Methenyltetrahydromethanopterin cyclohydrolase (Methanocella arvoryzae (strain DSM 22066 / NBRC 105507 / MRE50)).